The sequence spans 449 residues: RNA binding protein fox-1 homolog 2 (449 aa).

Positions 1–21 are enriched in low complexity; it reads MAEGGQAQQQPPQLGPGAAAR. The disordered stretch occupies residues 1–186; that stretch reads MAEGGQAQQQ…STPKRLHVSN (186 aa). Polar residues-rich tracts occupy residues 77–86 and 118–138; these read QGNQEPTTTP and YAGQTSEHNLTLYGSTQPHGE. Residues 139-176 show a composition bias toward low complexity; the sequence is QSSNSPSNQNGSLTQTEGGAQTDGQQSQTQSSENSESK. Residues 180–256 enclose the RRM domain; it reads KRLHVSNIPF…RKIEVNNATA (77 aa). Omega-N-methylarginine is present on residues arginine 236, glycine 241, tyrosine 268, and lysine 273. Residues glutamate 285 and proline 317 each carry the asymmetric dimethylarginine modification. 5 positions are modified to omega-N-methylarginine: leucine 318, leucine 323, alanine 336, arginine 340, and glycine 341. Asymmetric dimethylarginine occurs at positions 356 and 388. Residues arginine 440 and arginine 445 each carry the asymmetric dimethylarginine; alternate modification. Omega-N-methylarginine; alternate is present on residues arginine 440 and arginine 445.

In terms of assembly, interacts with ER-alpha N-terminal activation domain. Interacts with RBPMS; the interaction allows cooperative assembly of stable cell-specific alternative splicing regulatory complexes. In terms of tissue distribution, detected in brain neurons (at protein level). Detected in heart, brain, embryo, lung, liver, kidney and ovary.

The protein resides in the nucleus. It is found in the cytoplasm. RNA-binding protein that regulates alternative splicing events by binding to 5'-UGCAUGU-3' elements. Prevents binding of U2AF2 to the 3'-splice site. Regulates alternative splicing of tissue-specific exons and of differentially spliced exons during erythropoiesis. Seems to act as a coregulatory factor of ER-alpha. Together with RNA binding proteins RBPMS and MBNL1/2, activates vascular smooth muscle cells alternative splicing events. In Mus musculus (Mouse), this protein is RNA binding protein fox-1 homolog 2 (Rbfox2).